The following is a 1409-amino-acid chain: DNA-directed RNA polymerase subunit beta' (1409 aa).

Cys70, Cys72, Cys85, and Cys88 together coordinate Zn(2+). Mg(2+) is bound by residues Asp458, Asp460, and Asp462. Residues Cys813, Cys887, Cys894, and Cys897 each coordinate Zn(2+). Positions 1385-1403 (EAAELAGSTSDVSTTADAS) are enriched in low complexity. The tract at residues 1385-1409 (EAAELAGSTSDVSTTADASEGAASE) is disordered.

Belongs to the RNA polymerase beta' chain family. The RNAP catalytic core consists of 2 alpha, 1 beta, 1 beta' and 1 omega subunit. When a sigma factor is associated with the core the holoenzyme is formed, which can initiate transcription. Mg(2+) serves as cofactor. It depends on Zn(2+) as a cofactor.

The enzyme catalyses RNA(n) + a ribonucleoside 5'-triphosphate = RNA(n+1) + diphosphate. DNA-dependent RNA polymerase catalyzes the transcription of DNA into RNA using the four ribonucleoside triphosphates as substrates. The sequence is that of DNA-directed RNA polymerase subunit beta' from Variovorax paradoxus (strain S110).